Consider the following 200-residue polypeptide: Pyridoxal 5'-phosphate synthase subunit PdxT (200 aa).

Position 46–48 (46–48 (GES)) interacts with L-glutamine. The active-site Nucleophile is Cys-78. L-glutamine-binding positions include Arg-107 and 138–139 (IR). Residues His-175 and Glu-177 each act as charge relay system in the active site.

This sequence belongs to the glutaminase PdxT/SNO family. In terms of assembly, in the presence of PdxS, forms a dodecamer of heterodimers. Only shows activity in the heterodimer.

The enzyme catalyses aldehydo-D-ribose 5-phosphate + D-glyceraldehyde 3-phosphate + L-glutamine = pyridoxal 5'-phosphate + L-glutamate + phosphate + 3 H2O + H(+). The catalysed reaction is L-glutamine + H2O = L-glutamate + NH4(+). The protein operates within cofactor biosynthesis; pyridoxal 5'-phosphate biosynthesis. Functionally, catalyzes the hydrolysis of glutamine to glutamate and ammonia as part of the biosynthesis of pyridoxal 5'-phosphate. The resulting ammonia molecule is channeled to the active site of PdxS. This chain is Pyridoxal 5'-phosphate synthase subunit PdxT, found in Corynebacterium glutamicum (strain R).